The sequence spans 368 residues: Probable protein phosphatase 2C 58 (368 aa).

One can recognise a PPM-type phosphatase domain in the interval 23–329 (KFGLSSMQGW…DNMTMILVQF (307 aa)). Mn(2+)-binding residues include Asp57, Gly58, Asp272, and Asp320. The tract at residues 336-368 (NKNVSPAEQSAADKQPTGDTHWSEIHVTEESSS) is disordered. Basic and acidic residues predominate over residues 356–368 (HWSEIHVTEESSS).

Belongs to the PP2C family. It depends on Mg(2+) as a cofactor. Mn(2+) serves as cofactor.

The catalysed reaction is O-phospho-L-seryl-[protein] + H2O = L-seryl-[protein] + phosphate. It carries out the reaction O-phospho-L-threonyl-[protein] + H2O = L-threonyl-[protein] + phosphate. The polypeptide is Probable protein phosphatase 2C 58 (Oryza sativa subsp. japonica (Rice)).